Here is a 671-residue protein sequence, read N- to C-terminus: DNA ligase (671 aa).

NAD(+) is bound by residues 32 to 36 (DAEYD), 81 to 82 (SL), and E113. Catalysis depends on K115, which acts as the N6-AMP-lysine intermediate. 4 residues coordinate NAD(+): R136, E173, K290, and K314. Zn(2+) is bound by residues C408, C411, C426, and C432. Residues 593 to 671 (EIDSPFAGKT…EAEMLRLLGS (79 aa)) enclose the BRCT domain.

It belongs to the NAD-dependent DNA ligase family. LigA subfamily. Mg(2+) serves as cofactor. Requires Mn(2+) as cofactor.

It catalyses the reaction NAD(+) + (deoxyribonucleotide)n-3'-hydroxyl + 5'-phospho-(deoxyribonucleotide)m = (deoxyribonucleotide)n+m + AMP + beta-nicotinamide D-nucleotide.. Its function is as follows. DNA ligase that catalyzes the formation of phosphodiester linkages between 5'-phosphoryl and 3'-hydroxyl groups in double-stranded DNA using NAD as a coenzyme and as the energy source for the reaction. It is essential for DNA replication and repair of damaged DNA. This is DNA ligase from Shigella flexneri serotype 5b (strain 8401).